We begin with the raw amino-acid sequence, 175 residues long: Enhancer of mRNA-decapping protein 1 (175 aa).

Residues 1–27 are compositionally biased toward polar residues; that stretch reads MSTDTMYFNSSRLLPSAGRNKTNNLIK. 2 disordered regions span residues 1 to 113 and 155 to 175; these read MSTD…KDDT and GSTFATNGPREAKNLPKPSFL. Position 2 is an N-acetylserine (Ser2). Positions 35–47 are enriched in low complexity; it reads ARGNAAKNANNNN. Residues 58–77 are compositionally biased toward polar residues; sequence LPNGQKPNFGHSSNKKPSFN. A Phosphoserine modification is found at Ser82. Basic and acidic residues predominate over residues 100-113; the sequence is NNKETPRQNNKDDT.

This sequence belongs to the EDC family.

It localises to the cytoplasm. In terms of biological role, mRNA-binding protein which stimulates mRNA decapping by DCP1 and DCP2. Involved in the regulation of expression of multiple genes involved in glycolysis and gluconeogenesis. The protein is Enhancer of mRNA-decapping protein 1 (EDC1) of Saccharomyces cerevisiae (strain ATCC 204508 / S288c) (Baker's yeast).